We begin with the raw amino-acid sequence, 326 residues long: Cinnamoyl-CoA reductase CAD2 (326 aa).

NADP(+) is bound by residues 14 to 20 (GASGYIA), arginine 39, lysine 46, 66 to 67 (NL), and 86 to 88 (TAS). Residues serine 130, tyrosine 136, arginine 141, and tyrosine 165 each coordinate (E)-coniferaldehyde. Residues tyrosine 165, lysine 169, 192–195 (PAMV), and serine 207 each bind NADP(+). Lysine 169 serves as the catalytic Proton donor. (E)-coniferaldehyde contacts are provided by methionine 194, serine 207, phenylalanine 226, valine 257, and tyrosine 290.

The protein belongs to the NAD(P)-dependent epimerase/dehydratase family. Dihydroflavonol-4-reductase subfamily.

It is found in the cytoplasm. It carries out the reaction (E)-cinnamaldehyde + NADP(+) + CoA = (E)-cinnamoyl-CoA + NADPH + H(+). It catalyses the reaction (E)-coniferaldehyde + NADP(+) + CoA = (E)-feruloyl-CoA + NADPH + H(+). The catalysed reaction is (E)-4-coumaraldehyde + NADP(+) + CoA = (E)-4-coumaroyl-CoA + NADPH + H(+). Its pathway is aromatic compound metabolism; phenylpropanoid biosynthesis. Its function is as follows. Involved in lignin biosynthesis. Regulates the monolignol composition by catalyzing the conversion of cinnamoyl-CoAs into their corresponding cinnamaldehydes. Can use coumaraldehyde and coniferaldehyde as substrates, but barely sinapaldehyde. The sequence is that of Cinnamoyl-CoA reductase CAD2 from Medicago truncatula (Barrel medic).